A 555-amino-acid polypeptide reads, in one-letter code: uncharacterized protein (555 aa).

2 consecutive ABC transporter domains span residues 4–244 (VKVK…PPYK) and 255–547 (IQVR…ARFM). ATP is bound by residues 36–43 (GKSGAGKS) and 292–299 (GPSGVGKT).

The protein belongs to the ABC transporter superfamily.

This is an uncharacterized protein from Methanocaldococcus jannaschii (strain ATCC 43067 / DSM 2661 / JAL-1 / JCM 10045 / NBRC 100440) (Methanococcus jannaschii).